Reading from the N-terminus, the 192-residue chain is MSAKQPNRKPAGKRKESDASAQEGRERKRAAKRKGLKAGSRQQVEQAGKKSGTKQAKDPRIGSRKPVALIVEEKSSKPVAPKQIKEKKLVMTPEQELASIENDDRLNDLLDRLDAGETLEATEQAWVDQRVDRYQELMDELGIIDTDDDEDEADFDEADFDEPGQPASEEELWDRFTQVDYQPEPKPEPKKK.

Residues 1–12 show a composition bias toward basic residues; sequence MSAKQPNRKPAG. Disordered stretches follow at residues 1 to 87 and 145 to 192; these read MSAK…IKEK and DTDD…PKKK. Residues 13–26 show a composition bias toward basic and acidic residues; the sequence is KRKESDASAQEGRE. Residues 27 to 36 show a composition bias toward basic residues; it reads RKRAAKRKGL. Residues 145-172 are compositionally biased toward acidic residues; that stretch reads DTDDDEDEADFDEADFDEPGQPASEEEL. The span at 183 to 192 shows a compositional bias: basic and acidic residues; it reads PEPKPEPKKK.

It belongs to the YihI family. Interacts with Der.

A GTPase-activating protein (GAP) that modifies Der/EngA GTPase function. May play a role in ribosome biogenesis. This Aeromonas hydrophila subsp. hydrophila (strain ATCC 7966 / DSM 30187 / BCRC 13018 / CCUG 14551 / JCM 1027 / KCTC 2358 / NCIMB 9240 / NCTC 8049) protein is Der GTPase-activating protein YihI.